A 103-amino-acid chain; its full sequence is Integration host factor subunit beta (103 aa).

Residues 59–82 (RLGRNPKTGESVALPGKHVPHFKP) form a disordered region.

Belongs to the bacterial histone-like protein family. Heterodimer of an alpha and a beta chain.

This protein is one of the two subunits of integration host factor, a specific DNA-binding protein that functions in genetic recombination as well as in transcriptional and translational control. The protein is Integration host factor subunit beta of Xanthomonas oryzae pv. oryzae (strain MAFF 311018).